We begin with the raw amino-acid sequence, 460 residues long: ATP synthase subunit beta (460 aa).

150–157 (GGAGVGKT) is an ATP binding site.

Belongs to the ATPase alpha/beta chains family. In terms of assembly, F-type ATPases have 2 components, CF(1) - the catalytic core - and CF(0) - the membrane proton channel. CF(1) has five subunits: alpha(3), beta(3), gamma(1), delta(1), epsilon(1). CF(0) has three main subunits: a(1), b(2) and c(9-12). The alpha and beta chains form an alternating ring which encloses part of the gamma chain. CF(1) is attached to CF(0) by a central stalk formed by the gamma and epsilon chains, while a peripheral stalk is formed by the delta and b chains.

Its subcellular location is the cell inner membrane. It catalyses the reaction ATP + H2O + 4 H(+)(in) = ADP + phosphate + 5 H(+)(out). In terms of biological role, produces ATP from ADP in the presence of a proton gradient across the membrane. The catalytic sites are hosted primarily by the beta subunits. The protein is ATP synthase subunit beta of Shigella dysenteriae serotype 1 (strain Sd197).